Consider the following 303-residue polypeptide: MKVETMNWITEVVRPRIKTLFKRETPENLWVKCPETGQMVFHKEVEAHDFVIPGSEHHLRMSAQQRLKMMFDQGTWLDVPLPEAPVDPLKFRDEKRYVDRLKDARAKTGMADAFKVGFGRVGGLPMTLAVQDFGFMGGSLGMAAGEAFVRGAETALDKRTPYVLFAASGGARMQEGILSLMQMPRTTVAVRRLNRARLPYIVVLTNPTTGGVTASYAMLGDVHLAEPGALIGFAGPRVIEQTIREKLPDGFQRAEYLREHGMIDQVVHRRDLKATVARLCGLLMQAPAATPAPASAAAQPVPA.

Positions 29-298 (LWVKCPETGQ…ATPAPASAAA (270 aa)) constitute a CoA carboxyltransferase N-terminal domain.

It belongs to the AccD/PCCB family. As to quaternary structure, acetyl-CoA carboxylase is a heterohexamer composed of biotin carboxyl carrier protein (AccB), biotin carboxylase (AccC) and two subunits each of ACCase subunit alpha (AccA) and ACCase subunit beta (AccD).

It is found in the cytoplasm. The enzyme catalyses N(6)-carboxybiotinyl-L-lysyl-[protein] + acetyl-CoA = N(6)-biotinyl-L-lysyl-[protein] + malonyl-CoA. Its pathway is lipid metabolism; malonyl-CoA biosynthesis; malonyl-CoA from acetyl-CoA: step 1/1. Its function is as follows. Component of the acetyl coenzyme A carboxylase (ACC) complex. Biotin carboxylase (BC) catalyzes the carboxylation of biotin on its carrier protein (BCCP) and then the CO(2) group is transferred by the transcarboxylase to acetyl-CoA to form malonyl-CoA. This chain is Acetyl-coenzyme A carboxylase carboxyl transferase subunit beta, found in Methylobacterium sp. (strain 4-46).